We begin with the raw amino-acid sequence, 673 residues long: L-type lectin-domain containing receptor kinase SIT2 (673 aa).

The first 27 residues, 1–27 (MVLPKPEMPFFVLLLFLGLGCLRPAAA), serve as a signal peptide directing secretion. Over 28–296 (TDERFVFNGF…FPKPRSKTLE (269 aa)) the chain is Extracellular. The legume-lectin like stretch occupies residues 32 to 270 (FVFNGFTGAN…VLGWSFKMNG (239 aa)). Asn-41, Asn-60, Asn-82, Asn-118, Asn-138, Asn-191, Asn-214, Asn-235, and Asn-276 each carry an N-linked (GlcNAc...) asparagine glycan. Residues 297–317 (IVLPIASAVLVFAVAAAVFVF) traverse the membrane as a helical segment. The Cytoplasmic segment spans residues 318-673 (MRRRRMFSEL…GTFSDLSGGR (356 aa)). A Protein kinase domain is found at 352 to 631 (FSDKRLLGIG…LEGDVPLPEL (280 aa)). Residues 358–366 (LGIGGFGRV) and Lys-381 contribute to the ATP site. Asp-477 acts as the Proton acceptor in catalysis.

It in the C-terminal section; belongs to the protein kinase superfamily. Ser/Thr protein kinase family. The protein in the N-terminal section; belongs to the leguminous lectin family. In terms of tissue distribution, mainly expressed in root epidermal cells.

The protein resides in the cell membrane. It catalyses the reaction L-seryl-[protein] + ATP = O-phospho-L-seryl-[protein] + ADP + H(+). The enzyme catalyses L-threonyl-[protein] + ATP = O-phospho-L-threonyl-[protein] + ADP + H(+). Lectin-domain containing receptor kinase involved in salt stress response. Acts as a negative regulator of salt tolerance. This is L-type lectin-domain containing receptor kinase SIT2 from Oryza sativa subsp. japonica (Rice).